A 332-amino-acid chain; its full sequence is Capsular polysaccharide phosphotransferase WcwK (332 aa).

Belongs to the stealth family.

The protein is Capsular polysaccharide phosphotransferase WcwK (wcwK) of Streptococcus pneumoniae.